Here is a 271-residue protein sequence, read N- to C-terminus: Tryptophan synthase alpha chain (271 aa).

Active-site proton acceptor residues include glutamate 49 and aspartate 60.

The protein belongs to the TrpA family. Tetramer of two alpha and two beta chains.

The enzyme catalyses (1S,2R)-1-C-(indol-3-yl)glycerol 3-phosphate + L-serine = D-glyceraldehyde 3-phosphate + L-tryptophan + H2O. The protein operates within amino-acid biosynthesis; L-tryptophan biosynthesis; L-tryptophan from chorismate: step 5/5. In terms of biological role, the alpha subunit is responsible for the aldol cleavage of indoleglycerol phosphate to indole and glyceraldehyde 3-phosphate. This chain is Tryptophan synthase alpha chain, found in Leptothrix cholodnii (strain ATCC 51168 / LMG 8142 / SP-6) (Leptothrix discophora (strain SP-6)).